We begin with the raw amino-acid sequence, 182 residues long: Large ribosomal subunit protein uL6 (182 aa).

The protein belongs to the universal ribosomal protein uL6 family. Part of the 50S ribosomal subunit.

Functionally, this protein binds to the 23S rRNA, and is important in its secondary structure. It is located near the subunit interface in the base of the L7/L12 stalk, and near the tRNA binding site of the peptidyltransferase center. This Nostoc punctiforme (strain ATCC 29133 / PCC 73102) protein is Large ribosomal subunit protein uL6.